Here is a 554-residue protein sequence, read N- to C-terminus: 2-succinyl-5-enolpyruvyl-6-hydroxy-3-cyclohexene-1-carboxylate synthase (554 aa).

This sequence belongs to the TPP enzyme family. MenD subfamily. Homodimer. The cofactor is Mg(2+). Requires Mn(2+) as cofactor. Thiamine diphosphate serves as cofactor.

The enzyme catalyses isochorismate + 2-oxoglutarate + H(+) = 5-enolpyruvoyl-6-hydroxy-2-succinyl-cyclohex-3-ene-1-carboxylate + CO2. The protein operates within quinol/quinone metabolism; 1,4-dihydroxy-2-naphthoate biosynthesis; 1,4-dihydroxy-2-naphthoate from chorismate: step 2/7. It participates in quinol/quinone metabolism; menaquinone biosynthesis. Functionally, catalyzes the thiamine diphosphate-dependent decarboxylation of 2-oxoglutarate and the subsequent addition of the resulting succinic semialdehyde-thiamine pyrophosphate anion to isochorismate to yield 2-succinyl-5-enolpyruvyl-6-hydroxy-3-cyclohexene-1-carboxylate (SEPHCHC). The polypeptide is 2-succinyl-5-enolpyruvyl-6-hydroxy-3-cyclohexene-1-carboxylate synthase (Flavobacterium johnsoniae (strain ATCC 17061 / DSM 2064 / JCM 8514 / BCRC 14874 / CCUG 350202 / NBRC 14942 / NCIMB 11054 / UW101) (Cytophaga johnsonae)).